The primary structure comprises 325 residues: Terpene synthase 11 (325 aa).

Positions 97–102 (DDEYLE) match the DDxx(x)D/E motif motif. An NDxxSxxxD/E motif motif is present at residues 227–235 (NDIYSFVKE).

The protein belongs to the terpene synthase family.

The enzyme catalyses (2E,6E)-farnesyl diphosphate = (E)-beta-farnesene + diphosphate. The catalysed reaction is (2E,6E)-farnesyl diphosphate = (3E,6E)-alpha-farnesene + diphosphate. It catalyses the reaction geranylgeranyl diphosphate + H2O = (S)-(+)-nephthenol + diphosphate. In terms of biological role, terpene synthase that converts its substrate farnesyl diphosphate (FPP) into the sesquiterpenes (E)-beta-farnesene and (E,E)-alpha-farnesene. TPS11 also converts geranylgeranyl diphosphate (GGPP) into the diterpene (S)-nephthenol. This Dictyostelium purpureum (Slime mold) protein is Terpene synthase 11.